We begin with the raw amino-acid sequence, 326 residues long: Ribosomal large subunit pseudouridine synthase D (326 aa).

Residues Gln-18–Glu-91 form the S4 RNA-binding domain. Asp-139 is an active-site residue.

Belongs to the pseudouridine synthase RluA family.

It is found in the cytoplasm. It carries out the reaction uridine(1911/1915/1917) in 23S rRNA = pseudouridine(1911/1915/1917) in 23S rRNA. Responsible for synthesis of pseudouridine from uracil at positions 1911, 1915 and 1917 in 23S ribosomal RNA. This Shigella flexneri protein is Ribosomal large subunit pseudouridine synthase D (rluD).